Reading from the N-terminus, the 242-residue chain is uncharacterized protein (242 aa).

The HTH gntR-type domain occupies 17–85; it reads QRVDERIATT…HGSGSVVRDP (69 aa). Residues 45 to 64 constitute a DNA-binding region (H-T-H motif); sequence ERDLAERLGVNRTSLRQGLA.

This is an uncharacterized protein from Mycobacterium tuberculosis (strain ATCC 25618 / H37Rv).